The sequence spans 972 residues: Macrophage colony-stimulating factor 1 receptor (972 aa).

The N-terminal stretch at 1–19 (MGPGVLLLLLVATAWHGQG) is a signal peptide. Residues 20 to 517 (IPVIEPSVPE…HPPDEFLFTP (498 aa)) lie on the Extracellular side of the membrane. Ig-like C2-type domains are found at residues 21–104 (PVIE…VKDP), 107–197 (PWNV…KVQK), 203–290 (PALT…HSTS), 299–399 (AYLN…LTLR), and 402–502 (PEVS…IPIS). 3 disulfide bridges follow: cysteine 42-cysteine 84, cysteine 127-cysteine 177, and cysteine 224-cysteine 278. Asparagine 45, asparagine 73, asparagine 153, asparagine 240, asparagine 275, asparagine 302, asparagine 335, asparagine 353, asparagine 412, asparagine 428, and asparagine 480 each carry an N-linked (GlcNAc...) asparagine glycan. The cysteines at positions 419 and 485 are disulfide-linked. A helical membrane pass occupies residues 518–538 (VVVACMSIMALLLLLLLLLLY). Over 539–972 (KYKQKPKYQV…LLQPNNYQFC (434 aa)) the chain is Cytoplasmic. Positions 542–574 (QKPKYQVRWKIIESYEGNSYTFIDPTQLPYNEK) are regulatory juxtamembrane domain. Residues tyrosine 546 and tyrosine 561 each carry the phosphotyrosine; by autocatalysis modification. Residues 582–910 (LQFGKTLGAG…PTFQQICSFL (329 aa)) enclose the Protein kinase domain. ATP-binding positions include 588–596 (LGAGAFGKV) and lysine 616. Residues tyrosine 699 and tyrosine 708 each carry the phosphotyrosine; by autocatalysis modification. Serine 713 bears the Phosphoserine mark. Tyrosine 723 carries the phosphotyrosine; by autocatalysis modification. Catalysis depends on aspartate 778, which acts as the Proton acceptor. The interval 796–818 (DFGLARDIMNDSNYIVKGNARLP) is activation loop. Phosphotyrosine; by autocatalysis occurs at positions 809 and 923. The interval 918–950 (RRERDYTNLPSSSRSGGSGSSSSELEEESSSEH) is disordered. Over residues 928–940 (SSSRSGGSGSSSS) the composition is skewed to low complexity. Tyrosine 969 is modified (phosphotyrosine; by autocatalysis).

The protein belongs to the protein kinase superfamily. Tyr protein kinase family. CSF-1/PDGF receptor subfamily. Interacts with INPPL1/SHIP2 and THOC5. Monomer. Homodimer. Interacts with CSF1 and IL34. Interaction with dimeric CSF1 or IL34 leads to receptor homodimerization. Interacts (tyrosine phosphorylated) with PLCG2 (via SH2 domain). Interacts (tyrosine phosphorylated) with PIK3R1 (via SH2 domain). Interacts (tyrosine phosphorylated) with FYN, YES1 and SRC (via SH2 domain). Interacts (tyrosine phosphorylated) with CBL, GRB2 and SLA2. In terms of processing, autophosphorylated in response to CSF1 or IL34 binding. Phosphorylation at Tyr-561 is important for normal down-regulation of signaling by ubiquitination, internalization and degradation. Phosphorylation at Tyr-561 and Tyr-809 is important for interaction with SRC family members, including FYN, YES1 and SRC, and for subsequent activation of these protein kinases. Phosphorylation at Tyr-699 and Tyr-923 is important for interaction with GRB2. Phosphorylation at Tyr-723 is important for interaction with PIK3R1. Phosphorylation at Tyr-708 is important for normal receptor degradation. Phosphorylation at Tyr-723 and Tyr-809 is important for interaction with PLCG2. Phosphorylation at Tyr-969 is important for interaction with CBL. Dephosphorylation by PTPN2 negatively regulates downstream signaling and macrophage differentiation. Ubiquitinated. Becomes rapidly polyubiquitinated after autophosphorylation, leading to its degradation. Expressed in bone marrow and in differentiated blood mononuclear cells.

Its subcellular location is the cell membrane. It catalyses the reaction L-tyrosyl-[protein] + ATP = O-phospho-L-tyrosyl-[protein] + ADP + H(+). Present in an inactive conformation in the absence of bound ligand. CSF1 or IL34 binding leads to dimerization and activation by autophosphorylation on tyrosine residues. Inhibited by imatinib/STI-571 (Gleevec), dasatinib, sunitinib/SU11248, lestaurtinib/CEP-701, midostaurin/PKC-412, Ki20227, linifanib/ABT-869, Axitinib/AG013736, sorafenib/BAY 43-9006 and GW2580. Functionally, tyrosine-protein kinase that acts as a cell-surface receptor for CSF1 and IL34 and plays an essential role in the regulation of survival, proliferation and differentiation of hematopoietic precursor cells, especially mononuclear phagocytes, such as macrophages and monocytes. Promotes the release of pro-inflammatory chemokines in response to IL34 and CSF1, and thereby plays an important role in innate immunity and in inflammatory processes. Plays an important role in the regulation of osteoclast proliferation and differentiation, the regulation of bone resorption, and is required for normal bone and tooth development. Required for normal male and female fertility, and for normal development of milk ducts and acinar structures in the mammary gland during pregnancy. Promotes reorganization of the actin cytoskeleton, regulates formation of membrane ruffles, cell adhesion and cell migration, and promotes cancer cell invasion. Activates several signaling pathways in response to ligand binding, including the ERK1/2 and the JNK pathway. Phosphorylates PIK3R1, PLCG2, GRB2, SLA2 and CBL. Activation of PLCG2 leads to the production of the cellular signaling molecules diacylglycerol and inositol 1,4,5-trisphosphate, that then lead to the activation of protein kinase C family members, especially PRKCD. Phosphorylation of PIK3R1, the regulatory subunit of phosphatidylinositol 3-kinase, leads to activation of the AKT1 signaling pathway. Activated CSF1R also mediates activation of the MAP kinases MAPK1/ERK2 and/or MAPK3/ERK1, and of the SRC family kinases SRC, FYN and YES1. Activated CSF1R transmits signals both via proteins that directly interact with phosphorylated tyrosine residues in its intracellular domain, or via adapter proteins, such as GRB2. Promotes activation of STAT family members STAT3, STAT5A and/or STAT5B. Promotes tyrosine phosphorylation of SHC1 and INPP5D/SHIP-1. Receptor signaling is down-regulated by protein phosphatases, such as INPP5D/SHIP-1, that dephosphorylate the receptor and its downstream effectors, and by rapid internalization of the activated receptor. In the central nervous system, may play a role in the development of microglia macrophages. The chain is Macrophage colony-stimulating factor 1 receptor (CSF1R) from Homo sapiens (Human).